The sequence spans 1774 residues: Protein TIC 214 (1774 aa).

Transmembrane regions (helical) follow at residues 19-39, 68-88, 91-111, 133-153, 176-196, and 227-247; these read IINS…FSIG, FIAG…HLAL, PHTI…WNNH, VFLN…SSML, VGWL…LVWI, and IFSI…PSPI. Residues 254-268 show a composition bias toward basic and acidic residues; the sequence is GTSETEERGGTKQDQ. A disordered region spans residues 254 to 275; the sequence is GTSETEERGGTKQDQEVSTEEA.

This sequence belongs to the TIC214 family. As to quaternary structure, part of the Tic complex.

The protein resides in the plastid. It is found in the chloroplast inner membrane. Involved in protein precursor import into chloroplasts. May be part of an intermediate translocation complex acting as a protein-conducting channel at the inner envelope. This is Protein TIC 214 from Aethionema cordifolium (Lebanon stonecress).